The primary structure comprises 108 residues: Large ribosomal subunit protein uL22 (108 aa).

Belongs to the universal ribosomal protein uL22 family. Part of the 50S ribosomal subunit.

Functionally, this protein binds specifically to 23S rRNA; its binding is stimulated by other ribosomal proteins, e.g. L4, L17, and L20. It is important during the early stages of 50S assembly. It makes multiple contacts with different domains of the 23S rRNA in the assembled 50S subunit and ribosome. In terms of biological role, the globular domain of the protein is located near the polypeptide exit tunnel on the outside of the subunit, while an extended beta-hairpin is found that lines the wall of the exit tunnel in the center of the 70S ribosome. This is Large ribosomal subunit protein uL22 from Desulfatibacillum aliphaticivorans.